Consider the following 424-residue polypeptide: Methylenetetrahydrofolate--tRNA-(uracil-5-)-methyltransferase TrmFO 1 (424 aa).

G8 to G13 provides a ligand contact to FAD.

It belongs to the MnmG family. TrmFO subfamily. It depends on FAD as a cofactor.

Its subcellular location is the cytoplasm. The enzyme catalyses uridine(54) in tRNA + (6R)-5,10-methylene-5,6,7,8-tetrahydrofolate + NADH + H(+) = 5-methyluridine(54) in tRNA + (6S)-5,6,7,8-tetrahydrofolate + NAD(+). It carries out the reaction uridine(54) in tRNA + (6R)-5,10-methylene-5,6,7,8-tetrahydrofolate + NADPH + H(+) = 5-methyluridine(54) in tRNA + (6S)-5,6,7,8-tetrahydrofolate + NADP(+). In terms of biological role, catalyzes the folate-dependent formation of 5-methyl-uridine at position 54 (M-5-U54) in all tRNAs. This Mycoplasma mycoides subsp. mycoides SC (strain CCUG 32753 / NCTC 10114 / PG1) protein is Methylenetetrahydrofolate--tRNA-(uracil-5-)-methyltransferase TrmFO 1.